A 234-amino-acid polypeptide reads, in one-letter code: Phosphoglycolate phosphatase (234 aa).

Asp-15 acts as the Nucleophile in catalysis. Residues Asp-15, Asp-17, and Asp-177 each coordinate Mg(2+).

The protein belongs to the HAD-like hydrolase superfamily. CbbY/CbbZ/Gph/YieH family. As to quaternary structure, monomer. Mg(2+) serves as cofactor. Chloride is required as a cofactor.

The catalysed reaction is 2-phosphoglycolate + H2O = glycolate + phosphate. The protein operates within organic acid metabolism; glycolate biosynthesis; glycolate from 2-phosphoglycolate: step 1/1. In terms of biological role, specifically catalyzes the dephosphorylation of 2-phosphoglycolate. Is involved in the dissimilation of the intracellular 2-phosphoglycolate formed during the DNA repair of 3'-phosphoglycolate ends, a major class of DNA lesions induced by oxidative stress. This chain is Phosphoglycolate phosphatase, found in Photorhabdus laumondii subsp. laumondii (strain DSM 15139 / CIP 105565 / TT01) (Photorhabdus luminescens subsp. laumondii).